Here is a 631-residue protein sequence, read N- to C-terminus: Phosphomethylpyrimidine synthase (631 aa).

Substrate is bound by residues Asn239, Met268, Tyr297, His333, 353-355 (SRG), 394-397 (DGLR), and Glu433. His437 is a Zn(2+) binding site. Tyr460 provides a ligand contact to substrate. Residue His501 coordinates Zn(2+). [4Fe-4S] cluster-binding residues include Cys581, Cys584, and Cys589.

This sequence belongs to the ThiC family. Homodimer. Requires [4Fe-4S] cluster as cofactor.

It carries out the reaction 5-amino-1-(5-phospho-beta-D-ribosyl)imidazole + S-adenosyl-L-methionine = 4-amino-2-methyl-5-(phosphooxymethyl)pyrimidine + CO + 5'-deoxyadenosine + formate + L-methionine + 3 H(+). Its pathway is cofactor biosynthesis; thiamine diphosphate biosynthesis. Functionally, catalyzes the synthesis of the hydroxymethylpyrimidine phosphate (HMP-P) moiety of thiamine from aminoimidazole ribotide (AIR) in a radical S-adenosyl-L-methionine (SAM)-dependent reaction. In Citrobacter koseri (strain ATCC BAA-895 / CDC 4225-83 / SGSC4696), this protein is Phosphomethylpyrimidine synthase.